A 417-amino-acid polypeptide reads, in one-letter code: Serine hydroxymethyltransferase 2 (417 aa).

(6S)-5,6,7,8-tetrahydrofolate is bound by residues leucine 121 and 125-127 (GHL). Residue lysine 230 is modified to N6-(pyridoxal phosphate)lysine. A (6S)-5,6,7,8-tetrahydrofolate-binding site is contributed by 355–357 (SPF).

It belongs to the SHMT family. As to quaternary structure, homodimer. The cofactor is pyridoxal 5'-phosphate.

Its subcellular location is the cytoplasm. It catalyses the reaction (6R)-5,10-methylene-5,6,7,8-tetrahydrofolate + glycine + H2O = (6S)-5,6,7,8-tetrahydrofolate + L-serine. Its pathway is one-carbon metabolism; tetrahydrofolate interconversion. The protein operates within amino-acid biosynthesis; glycine biosynthesis; glycine from L-serine: step 1/1. In terms of biological role, catalyzes the reversible interconversion of serine and glycine with tetrahydrofolate (THF) serving as the one-carbon carrier. This reaction serves as the major source of one-carbon groups required for the biosynthesis of purines, thymidylate, methionine, and other important biomolecules. Also exhibits THF-independent aldolase activity toward beta-hydroxyamino acids, producing glycine and aldehydes, via a retro-aldol mechanism. The chain is Serine hydroxymethyltransferase 2 from Pseudomonas fluorescens (strain ATCC BAA-477 / NRRL B-23932 / Pf-5).